We begin with the raw amino-acid sequence, 579 residues long: Potassium-transporting ATPase potassium-binding subunit (579 aa).

Transmembrane regions (helical) follow at residues 2-22 (MNLV…AIPL), 66-86 (SFSV…LHIF), 135-155 (GLTV…FALI), 177-197 (VLYI…SQGV), 260-280 (TILS…ALCF), 292-312 (GIAI…IVGV), 391-411 (VFGG…LAVF), 437-457 (VLVC…ASIL), 490-510 (FAGF…SMIF), and 546-566 (FIGL…FPAL).

It belongs to the KdpA family. As to quaternary structure, the system is composed of three essential subunits: KdpA, KdpB and KdpC.

The protein localises to the cell membrane. Its function is as follows. Part of the high-affinity ATP-driven potassium transport (or Kdp) system, which catalyzes the hydrolysis of ATP coupled with the electrogenic transport of potassium into the cytoplasm. This subunit binds the extracellular potassium ions and delivers the ions to the membrane domain of KdpB through an intramembrane tunnel. In Clostridium botulinum (strain Eklund 17B / Type B), this protein is Potassium-transporting ATPase potassium-binding subunit.